The following is a 950-amino-acid chain: Glycine dehydrogenase (decarboxylating) (950 aa).

Lysine 699 bears the N6-(pyridoxal phosphate)lysine mark.

Belongs to the GcvP family. In terms of assembly, the glycine cleavage system is composed of four proteins: P, T, L and H. It depends on pyridoxal 5'-phosphate as a cofactor.

It catalyses the reaction N(6)-[(R)-lipoyl]-L-lysyl-[glycine-cleavage complex H protein] + glycine + H(+) = N(6)-[(R)-S(8)-aminomethyldihydrolipoyl]-L-lysyl-[glycine-cleavage complex H protein] + CO2. Its function is as follows. The glycine cleavage system catalyzes the degradation of glycine. The P protein binds the alpha-amino group of glycine through its pyridoxal phosphate cofactor; CO(2) is released and the remaining methylamine moiety is then transferred to the lipoamide cofactor of the H protein. This is Glycine dehydrogenase (decarboxylating) from Chromobacterium violaceum (strain ATCC 12472 / DSM 30191 / JCM 1249 / CCUG 213 / NBRC 12614 / NCIMB 9131 / NCTC 9757 / MK).